A 232-amino-acid polypeptide reads, in one-letter code: Myb-related protein 308 (232 aa).

2 consecutive HTH myb-type domains span residues 9-61 and 62-116; these read KAHT…INYL and RPDL…RRKL. 2 consecutive DNA-binding regions (H-T-H motif) follow at residues 37–61 and 89–112; these read WRSLPKAAGLLRCGKSCRLRWINYL and WSLIAGRLPGRTDNEIKNYWNTHI.

In terms of tissue distribution, expressed in roots, stems, leaves, seed pods and flowers.

It is found in the nucleus. Its function is as follows. Transcription factor. This Antirrhinum majus (Garden snapdragon) protein is Myb-related protein 308.